Here is a 342-residue protein sequence, read N- to C-terminus: RNA 3'-terminal phosphate cyclase (342 aa).

Residues Gln102 and 283–287 (HLADQ) contribute to the ATP site. His308 acts as the Tele-AMP-histidine intermediate in catalysis.

Belongs to the RNA 3'-terminal cyclase family. Type 1 subfamily.

Its subcellular location is the cytoplasm. It carries out the reaction a 3'-end 3'-phospho-ribonucleotide-RNA + ATP = a 3'-end 2',3'-cyclophospho-ribonucleotide-RNA + AMP + diphosphate. Catalyzes the conversion of 3'-phosphate to a 2',3'-cyclic phosphodiester at the end of RNA. The mechanism of action of the enzyme occurs in 3 steps: (A) adenylation of the enzyme by ATP; (B) transfer of adenylate to an RNA-N3'P to produce RNA-N3'PP5'A; (C) and attack of the adjacent 2'-hydroxyl on the 3'-phosphorus in the diester linkage to produce the cyclic end product. The biological role of this enzyme is unknown but it is likely to function in some aspects of cellular RNA processing. In Pseudomonas fluorescens (strain ATCC BAA-477 / NRRL B-23932 / Pf-5), this protein is RNA 3'-terminal phosphate cyclase.